The sequence spans 208 residues: Small ribosomal subunit protein uS4 (208 aa).

The S4 RNA-binding domain maps to 98 to 159 (RRLDNVVYRL…KSRNVAAISE (62 aa)).

This sequence belongs to the universal ribosomal protein uS4 family. Part of the 30S ribosomal subunit. Contacts protein S5. The interaction surface between S4 and S5 is involved in control of translational fidelity.

One of the primary rRNA binding proteins, it binds directly to 16S rRNA where it nucleates assembly of the body of the 30S subunit. Its function is as follows. With S5 and S12 plays an important role in translational accuracy. The polypeptide is Small ribosomal subunit protein uS4 (Trichlorobacter lovleyi (strain ATCC BAA-1151 / DSM 17278 / SZ) (Geobacter lovleyi)).